Reading from the N-terminus, the 209-residue chain is Ribosomal RNA large subunit methyltransferase E (209 aa).

Glycine 63, tryptophan 65, aspartate 83, aspartate 99, and aspartate 124 together coordinate S-adenosyl-L-methionine. Catalysis depends on lysine 164, which acts as the Proton acceptor.

It belongs to the class I-like SAM-binding methyltransferase superfamily. RNA methyltransferase RlmE family.

The protein resides in the cytoplasm. It carries out the reaction uridine(2552) in 23S rRNA + S-adenosyl-L-methionine = 2'-O-methyluridine(2552) in 23S rRNA + S-adenosyl-L-homocysteine + H(+). Functionally, specifically methylates the uridine in position 2552 of 23S rRNA at the 2'-O position of the ribose in the fully assembled 50S ribosomal subunit. This is Ribosomal RNA large subunit methyltransferase E from Shewanella piezotolerans (strain WP3 / JCM 13877).